A 199-amino-acid polypeptide reads, in one-letter code: Neurotrophic factor BDNF precursor form (199 aa).

Positions 1-23 are disordered; the sequence is GQGSLAYPGLRTQGNLETLSGPN. A propeptide spanning residues 1–100 is cleaved from the precursor; that stretch reads GQGSLAYPGL…AANMSMRVRR (100 aa). The span at 12-23 shows a compositional bias: polar residues; the sequence is TQGNLETLSGPN. An N-linked (GlcNAc...) asparagine glycan is attached at asparagine 93. A disulfide bond links cysteine 113 and cysteine 180.

This sequence belongs to the NGF-beta family.

The protein localises to the secreted. Its function is as follows. Promotes the survival of neuronal populations that are all located either in the central nervous system or directly connected to it. This chain is Neurotrophic factor BDNF precursor form (BDNF), found in Morelia spilota (Carpet python).